A 243-amino-acid chain; its full sequence is MSSGTELLWPGAALLVLLGVAASLCVRCSRPGAKRSEKIYQQRSLREDQQSFTGSRTYSLVGQAWPGPLADMAPTRKDKLLQFYPSLEDPASSRYQNFSKGSRHGSEEAYIDPIAMEYYNWGRFSKPPEDDDANSYENVLICKQKTTETGAQQEGIGGLCRGDLSLSLALKTGPTSGLCPSASPEEDEESEDYQNSASIHQWRESRKVMGQLQREASPGPVGSPDEEDGEPDYVNGEVAATEA.

Residues 1–5 (MSSGT) are Extracellular-facing. The helical; Signal-anchor for type III membrane protein transmembrane segment at 6–26 (ELLWPGAALLVLLGVAASLCV) threads the bilayer. Residues Cys25 and Cys28 are each lipidated (S-palmitoyl cysteine). Over 27–243 (RCSRPGAKRS…VNGEVAATEA (217 aa)) the chain is Cytoplasmic. Phosphoserine is present on Ser44. A Phosphotyrosine modification is found at Tyr58. A phosphoserine mark is found at Ser59 and Ser92. Residues Tyr136, Tyr193, and Tyr233 each carry the phosphotyrosine modification. The tract at residues 174–243 (PTSGLCPSAS…VNGEVAATEA (70 aa)) is disordered.

When phosphorylated, interacts with GRB2. May also interact with SOS1, GAB1 and CBL. Phosphorylated on tyrosines following cross-linking of BCR in B-cells, FCGR1 in myeloid cells, or FCER1 in mast cells; which induces the recruitment of GRB2. In terms of processing, may be polyubiquitinated. In terms of tissue distribution, highly expressed in spleen, peripheral blood lymphocytes, and germinal centers of lymph nodes. Also expressed in placenta, lung, pancreas and small intestine. Present in B-cells, NK cells and monocytes. Absent from T-cells (at protein level).

The protein localises to the cell membrane. In terms of biological role, involved in FCER1 (high affinity immunoglobulin epsilon receptor)-mediated signaling in mast cells. May also be involved in BCR (B-cell antigen receptor)-mediated signaling in B-cells and FCGR1 (high affinity immunoglobulin gamma Fc receptor I)-mediated signaling in myeloid cells. Couples activation of these receptors and their associated kinases with distal intracellular events through the recruitment of GRB2. The sequence is that of Linker for activation of T-cells family member 2 (LAT2) from Homo sapiens (Human).